The following is a 242-amino-acid chain: Phosphoribosylaminoimidazole-succinocarboxamide synthase (242 aa).

This sequence belongs to the SAICAR synthetase family.

It catalyses the reaction 5-amino-1-(5-phospho-D-ribosyl)imidazole-4-carboxylate + L-aspartate + ATP = (2S)-2-[5-amino-1-(5-phospho-beta-D-ribosyl)imidazole-4-carboxamido]succinate + ADP + phosphate + 2 H(+). It functions in the pathway purine metabolism; IMP biosynthesis via de novo pathway; 5-amino-1-(5-phospho-D-ribosyl)imidazole-4-carboxamide from 5-amino-1-(5-phospho-D-ribosyl)imidazole-4-carboxylate: step 1/2. The polypeptide is Phosphoribosylaminoimidazole-succinocarboxamide synthase (Prochlorococcus marinus subsp. pastoris (strain CCMP1986 / NIES-2087 / MED4)).